We begin with the raw amino-acid sequence, 94 residues long: uncharacterized protein (94 aa).

This is an uncharacterized protein from Archaeoglobus fulgidus (strain ATCC 49558 / DSM 4304 / JCM 9628 / NBRC 100126 / VC-16).